The sequence spans 327 residues: Aquaporin-1 (327 aa).

The segment at 1 to 34 (MSSNDSNDTDKQHTRLDPTGVDDAYIPPEQPETK) is disordered. Residues 1–48 (MSSNDSNDTDKQHTRLDPTGVDDAYIPPEQPETKHHRFKISRDTLRNH) lie on the Cytoplasmic side of the membrane. Residues 49–69 (FIAAVGEFCGTFMFLWCAYVI) traverse the membrane as a helical segment. The Extracellular portion of the chain corresponds to 70–91 (CNVANHDVALVAAPDGSHPGQL). A helical membrane pass occupies residues 92–112 (IMIAIGFGFSVMFSIWCFAGV). Over 113 to 136 (SGGALNPAVSLSLCLARAVSPTRC) the chain is Cytoplasmic. The NPA 1 signature appears at 118–120 (NPA). Residues 137–157 (VVMWVSQIVAGMAAGGAASAM) traverse the membrane as a helical segment. Over 158 to 176 (TPGEVLFANSLGLGCSRTR) the chain is Extracellular. The chain crosses the membrane as a helical span at residues 177-197 (GLFLEMFGTAILCLTVLMTAV). Residues 198–203 (EKRETN) lie on the Cytoplasmic side of the membrane. The chain crosses the membrane as a helical span at residues 204–224 (FMAALPIGISLFIAHVALTAY). The Extracellular portion of the chain corresponds to 225–248 (TGTGVNPARSLGAAVAARYFPHYH). Residues 230–232 (NPA) carry the NPA 2 motif. A helical transmembrane segment spans residues 249–269 (WIYWIGPLLGSILAWSVWQLL). Over 270–327 (QILDYTTYVTAEKAASTKEKAQKKVKPAVPLLWLKSNFPLLFFISRSLALNVIIFGKN) the chain is Cytoplasmic.

This sequence belongs to the MIP/aquaporin (TC 1.A.8) family.

It is found in the endoplasmic reticulum membrane. It localises to the cell membrane. In terms of biological role, water channel required to facilitate the transport of water across membranes. Involved in sporulation, freeze tolerance and osmotolerance. Is non-functional in most laboratory strains. The polypeptide is Aquaporin-1 (AQY1) (Saccharomyces cerevisiae (Baker's yeast)).